Reading from the N-terminus, the 468-residue chain is Adenylyltransferase and sulfurtransferase MOCS3-1 (468 aa).

ATP contacts are provided by residues glycine 111, aspartate 132, 139–143, lysine 156, and 200–201; these read NNLHR and DN. Zn(2+) is bound by residues cysteine 241 and cysteine 244. The Glycyl thioester intermediate; for adenylyltransferase activity role is filled by cysteine 258. The Zn(2+) site is built by cysteine 316 and cysteine 319. One can recognise a Rhodanese domain in the interval 371–466; it reads DGEPHLLLDV…WGRDVDPDFP (96 aa). Cysteine 426 acts as the Cysteine persulfide intermediate; for sulfurtransferase activity in catalysis.

In the N-terminal section; belongs to the HesA/MoeB/ThiF family. UBA4 subfamily. Zn(2+) is required as a cofactor.

Its subcellular location is the cytoplasm. It catalyses the reaction [molybdopterin-synthase sulfur-carrier protein]-C-terminal Gly-Gly + ATP + H(+) = [molybdopterin-synthase sulfur-carrier protein]-C-terminal Gly-Gly-AMP + diphosphate. It carries out the reaction [molybdopterin-synthase sulfur-carrier protein]-C-terminal Gly-Gly-AMP + S-sulfanyl-L-cysteinyl-[cysteine desulfurase] + AH2 = [molybdopterin-synthase sulfur-carrier protein]-C-terminal-Gly-aminoethanethioate + L-cysteinyl-[cysteine desulfurase] + A + AMP + 2 H(+). The protein operates within tRNA modification; 5-methoxycarbonylmethyl-2-thiouridine-tRNA biosynthesis. It participates in cofactor biosynthesis; molybdopterin biosynthesis. In terms of biological role, plays a central role in 2-thiolation of mcm(5)S(2)U at tRNA wobble positions of cytosolic tRNA(Lys), tRNA(Glu) and tRNA(Gln). Also essential during biosynthesis of the molybdenum cofactor. Acts by mediating the C-terminal thiocarboxylation of sulfur carriers URM1 and MOCS2A. Its N-terminus first activates URM1 and MOCS2A as acyl-adenylates (-COAMP), then the persulfide sulfur on the catalytic cysteine is transferred to URM1 and MOCS2A to form thiocarboxylation (-COSH) of their C-terminus. The reaction probably involves hydrogen sulfide that is generated from the persulfide intermediate and that acts as a nucleophile towards URM1 and MOCS2A. Subsequently, a transient disulfide bond is formed. Does not use thiosulfate as sulfur donor; NFS1 probably acting as a sulfur donor for thiocarboxylation reactions. The polypeptide is Adenylyltransferase and sulfurtransferase MOCS3-1 (Zea mays (Maize)).